We begin with the raw amino-acid sequence, 361 residues long: Phosphoribosylformylglycinamidine cyclo-ligase (361 aa).

Belongs to the AIR synthase family.

The protein localises to the cytoplasm. The catalysed reaction is 2-formamido-N(1)-(5-O-phospho-beta-D-ribosyl)acetamidine + ATP = 5-amino-1-(5-phospho-beta-D-ribosyl)imidazole + ADP + phosphate + H(+). Its pathway is purine metabolism; IMP biosynthesis via de novo pathway; 5-amino-1-(5-phospho-D-ribosyl)imidazole from N(2)-formyl-N(1)-(5-phospho-D-ribosyl)glycinamide: step 2/2. The sequence is that of Phosphoribosylformylglycinamidine cyclo-ligase from Bartonella henselae (strain ATCC 49882 / DSM 28221 / CCUG 30454 / Houston 1) (Rochalimaea henselae).